The sequence spans 85 residues: uncharacterized protein (85 aa).

2 helical membrane passes run 12–34 (ICLS…VLAF) and 49–71 (IPEF…NGFV).

The protein resides in the cell membrane. This is an uncharacterized protein from Archaeoglobus fulgidus (strain ATCC 49558 / DSM 4304 / JCM 9628 / NBRC 100126 / VC-16).